The chain runs to 354 residues: Heat-inducible transcription repressor HrcA (354 aa).

The protein belongs to the HrcA family.

Negative regulator of class I heat shock genes (grpE-dnaK-dnaJ and groELS operons). Prevents heat-shock induction of these operons. The chain is Heat-inducible transcription repressor HrcA from Novosphingobium aromaticivorans (strain ATCC 700278 / DSM 12444 / CCUG 56034 / CIP 105152 / NBRC 16084 / F199).